Reading from the N-terminus, the 1220-residue chain is Osmosensing histidine protein kinase SLN1 (1220 aa).

The Cytoplasmic portion of the chain corresponds to 1–22; sequence MRFGLPSKLELTPPFRIGIRTQ. Residues 23–46 traverse the membrane as a helical segment; the sequence is LTALVSIVALGSLIILAVTTGVYF. Residues 47-333 are Extracellular-facing; that stretch reads TSNYKNLRSD…FLSPATKLAK (287 aa). 6 N-linked (GlcNAc...) asparagine glycosylation sites follow: asparagine 100, asparagine 138, asparagine 142, asparagine 181, asparagine 224, and asparagine 272. Residues 334-354 form a helical membrane-spanning segment; it reads IITGTVIAIGVFVILLTLPLA. The Cytoplasmic portion of the chain corresponds to 355–1220; that stretch reads HWAVQPIVRL…AAYQGKKNNK (866 aa). Disordered stretches follow at residues 414–433 and 444–500; these read GSTT…GAAF and NLGN…HILT. Residues 451 to 468 are compositionally biased toward basic and acidic residues; the sequence is SPPEEENKIPNNHTDAKI. Serine 502 is modified (phosphoserine). One can recognise a Histidine kinase domain in the interval 573-928; it reads NISHELRTPL…KFTFTLPLNQ (356 aa). Histidine 576 is subject to Phosphohistidine; by autocatalysis. A phosphoserine mark is found at serine 758 and serine 833. Disordered stretches follow at residues 960–1016 and 1040–1081; these read AKSI…DNGG and NSLS…VKDD. The segment covering 965 to 984 has biased composition (polar residues); the sequence is SRQSTSSVATPATNRSSLTN. Basic and acidic residues predominate over residues 988-1000; that stretch reads PEVRSKGKHETKD. Phosphoserine is present on residues serine 1041 and serine 1044. Over residues 1063–1075 the composition is skewed to polar residues; it reads LQSTGTATSSRNI. Residues 1089-1210 enclose the Response regulatory domain; sequence KILVVEDNHV…KLKTILTEFC (122 aa). Positions 1094, 1095, 1144, and 1195 each coordinate Mg(2+). Position 1144 is a 4-aspartylphosphate (aspartate 1144).

In terms of assembly, interacts with DJP1, MOG1 and YPD1. Post-translationally, the phosphorelay mechanism involves the sequential transfer of a phosphate group from His-576 (H1) in the histidine kinase domain (transmitter domain) to Asp-1144 (D1) of the response regulatory domain (receiver domain). This transfer probably occurs between two SLN1 molecules, rather than intramolecularly. The phosphate group is further transferred to 'His-64' (H2) of YPD1 and finally to 'Asp-554' (D2) of SSK1 or 'Asp-427' (D2) of SKN7.

The protein resides in the cell membrane. It carries out the reaction ATP + protein L-histidine = ADP + protein N-phospho-L-histidine.. Functionally, histidine kinase that acts as an osmosensor at the plasma membrane. Part of the bifurcated SLN1-YPD1-SKN7/SSK1 two-component regulatory system, which controls activity of the HOG1 pathway and gene expression in response to changes in the osmolarity of the extracellular environment. Under normal osmotic conditions, the histidine kinase autophosphorylates His-576. This phosphate is subsequently transferred to Asp-1144, from where it is relayed to 'His-64' of the phosphorelay intermediate protein YPD1. Under high osmolarity conditions, the histidine kinase is no longer active. The protein is Osmosensing histidine protein kinase SLN1 (SLN1) of Saccharomyces cerevisiae (strain ATCC 204508 / S288c) (Baker's yeast).